Here is a 3110-residue protein sequence, read N- to C-terminus: Huntingtin (3110 aa).

The segment at 1 to 58 is disordered; it reads MKAFESLKSFQQQQQQQQPPPQPPPPPPPPPQPPQPPPQGQPPPPPPLPGPAEEPLHR. K2 is subject to N6-acetyllysine. The span at 18 to 52 shows a compositional bias: pro residues; sequence QPPPQPPPPPPPPPQPPQPPPQGQPPPPPPLPGPA. N6-acetyllysine is present on residues K146 and K204. 2 HEAT repeats span residues 174-211 and 216-253; these read PYLV…SFGN and NEIK…HSRR. N6-acetyllysine is present on K313. A phosphoserine mark is found at S387, S389, and S402. K412 is subject to N6-acetyllysine. Residues 462 to 473 are interaction with ZDHHC17; it reads GHDIITEQPRSQ. The segment at 487 to 549 is disordered; that stretch reads DLTSAATDGD…PDSAVTPSDS (63 aa). Positions 521–549 are enriched in polar residues; that stretch reads DGTQASSPISDSSQTTTEGPDSAVTPSDS. G522 carries the N-myristoyl glycine lipid modification. Phosphoserine is present on residues S611 and S614. HEAT repeat units lie at residues 773–810 and 873–911; these read FSLV…SLCS and KLQE…KLFY. The tract at residues 1137–1195 is disordered; it reads KAALPSLTNPPSLSPIRRKGKEKEPGEQTSTPMSPKKGGEASTASRQSDTSGPVTASKS. The segment covering 1140-1151 has biased composition (low complexity); sequence LPSLTNPPSLSP. Phosphoserine; by CDK5 occurs at positions 1150 and 1170. Residues 1178–1195 show a composition bias toward polar residues; it reads STASRQSDTSGPVTASKS. An HEAT 5 repeat occupies 1395 to 1432; it reads LFEPLVIKALKQYTTTTSVQLQKQVLDLLAQLVQLRVN. Residue S1845 is modified to Phosphoserine. The short motif at 2363 to 2372 is the Nuclear export signal element; the sequence is IVVSLARLPL. The segment at 2601 to 2628 is disordered; that stretch reads EEEWDEEEEEEADAPAPTSPPVSPVNSR. Over residues 2602 to 2613 the composition is skewed to acidic residues; it reads EEWDEEEEEEAD.

The protein belongs to the huntingtin family. Interacts with PFN1. Interacts through its N-terminus with PRPF40A. Interacts with PQBP1. Interacts with SETD2. Interacts with SH3GLB1. Interacts with SYVN. Interacts with TPR; the interaction is inhibited by forms of Huntingtin with expanded polyglutamine stretch. Interacts with ZDHHC13 (via ANK repeats). Interacts with ZDHHC17 (via ANK repeats). Interacts with F8A1/F8A2/F8A3. Found in a complex with F8A1/F8A2/F8A3, HTT and RAB5A; mediates the recruitment of HTT by RAB5A. Phosphorylation at Ser-1150 and Ser-1170 by CDK5 in response to DNA damage in nuclei of neurons protects neurons against polyglutamine expansion as well as DNA damage mediated toxicity. In terms of processing, cleaved by caspases downstream of the polyglutamine stretch. Post-translationally, myristoylated at Gly-522, following proteolytic cleavage at Asp-521. In terms of tissue distribution, expressed to a high degree in all the regions of the brain of adults and in meiotic cells of the testis. In addition, very low levels are detected in various non-neuronal tissues (heart, muscle, liver, lung and kidney).

It localises to the cytoplasm. It is found in the nucleus. The protein localises to the cytoplasmic vesicle. Its subcellular location is the autophagosome. May play a role in microtubule-mediated transport or vesicle function. In terms of biological role, promotes the formation of autophagic vesicles. The protein is Huntingtin (Htt) of Rattus norvegicus (Rat).